The primary structure comprises 368 residues: UDP-N-acetylglucosamine--N-acetylmuramyl-(pentapeptide) pyrophosphoryl-undecaprenol N-acetylglucosamine transferase (368 aa).

UDP-N-acetyl-alpha-D-glucosamine-binding positions include 11–13 (TGG), Asn123, Arg164, Ser188, Ile250, and Gln295.

This sequence belongs to the glycosyltransferase 28 family. MurG subfamily.

It localises to the cell inner membrane. The enzyme catalyses di-trans,octa-cis-undecaprenyl diphospho-N-acetyl-alpha-D-muramoyl-L-alanyl-D-glutamyl-meso-2,6-diaminopimeloyl-D-alanyl-D-alanine + UDP-N-acetyl-alpha-D-glucosamine = di-trans,octa-cis-undecaprenyl diphospho-[N-acetyl-alpha-D-glucosaminyl-(1-&gt;4)]-N-acetyl-alpha-D-muramoyl-L-alanyl-D-glutamyl-meso-2,6-diaminopimeloyl-D-alanyl-D-alanine + UDP + H(+). Its pathway is cell wall biogenesis; peptidoglycan biosynthesis. Its function is as follows. Cell wall formation. Catalyzes the transfer of a GlcNAc subunit on undecaprenyl-pyrophosphoryl-MurNAc-pentapeptide (lipid intermediate I) to form undecaprenyl-pyrophosphoryl-MurNAc-(pentapeptide)GlcNAc (lipid intermediate II). The sequence is that of UDP-N-acetylglucosamine--N-acetylmuramyl-(pentapeptide) pyrophosphoryl-undecaprenol N-acetylglucosamine transferase from Solidesulfovibrio magneticus (strain ATCC 700980 / DSM 13731 / RS-1) (Desulfovibrio magneticus).